The chain runs to 814 residues: Cadherin-15 (814 aa).

The N-terminal stretch at 1 to 21 is a signal peptide; it reads MDAAFLLVLGLLAQSLCLSLG. Positions 22–60 are excised as a propeptide; that stretch reads VPGWRRPTTLYPWRRAPALSRVRRAWVIPPISVSENHKR. 5 Cadherin domains span residues 61–152, 153–260, 261–375, 376–481, and 482–590; these read LPYP…RPAF, LQEA…APEF, TRDE…PPVF, QENP…DHAP, and VLAP…VCLP. The Extracellular segment spans residues 61–606; that stretch reads LPYPLVQIKS…AGGTGLSLGA (546 aa). Asn-227 is a glycosylation site (N-linked (GlcNAc...) asparagine). 3 N-linked (GlcNAc...) asparagine glycosylation sites follow: Asn-531, Asn-538, and Asn-576. Residues 607 to 626 form a helical membrane-spanning segment; sequence LVIVLASALLLLVLVLLVAL. Topologically, residues 627-814 are cytoplasmic; sequence RARFWKQSRG…LLPRHRGRTA (188 aa). Disordered regions lie at residues 636 to 663 and 676 to 703; these read GKGL…GEED and TALS…PPRV.

Expressed in the brain and cerebellum.

The protein resides in the cell membrane. Cadherins are calcium-dependent cell adhesion proteins. They preferentially interact with themselves in a homophilic manner in connecting cells; cadherins may thus contribute to the sorting of heterogeneous cell types. M-cadherin is part of the myogenic program and may provide a trigger for terminal muscle differentiation. The sequence is that of Cadherin-15 (CDH15) from Homo sapiens (Human).